The sequence spans 115 residues: Pro-FMRFamide-related neuropeptide FF (115 aa).

The N-terminal stretch at 1 to 22 (MDARQAAALLLVLLLVTDWSHA) is a signal peptide. Disordered stretches follow at residues 20–51 (SHAEGPGGRDGGDQIFMEEDSGAHPAQDAQTP) and 78–102 (FGRNTRGSWSNKRLSPRAGEGLSSP). Residues 23–66 (EGPGGRDGGDQIFMEEDSGAHPAQDAQTPRSLLRSLLQAMQRPG) constitute a propeptide that is removed on maturation. Position 78 is a phenylalanine amide (phenylalanine 78). The propeptide occupies 81-94 (NTRGSWSNKRLSPR). The residue at position 112 (phenylalanine 112) is a Phenylalanine amide.

This sequence belongs to the FARP (FMRFamide related peptide) family.

The protein resides in the secreted. Functionally, morphine modulating peptides. Have wide-ranging physiologic effects, including the modulation of morphine-induced analgesia, elevation of arterial blood pressure, and increased somatostatin secretion from the pancreas. The neuropeptide FF potentiates and sensitizes ASIC3 cation channel. The polypeptide is Pro-FMRFamide-related neuropeptide FF (NPFF) (Bos taurus (Bovine)).